Reading from the N-terminus, the 284-residue chain is Bifunctional protein FolD (284 aa).

NADP(+) is bound by residues 165-167 (GRG), T192, and V233.

Belongs to the tetrahydrofolate dehydrogenase/cyclohydrolase family. As to quaternary structure, homodimer.

The catalysed reaction is (6R)-5,10-methylene-5,6,7,8-tetrahydrofolate + NADP(+) = (6R)-5,10-methenyltetrahydrofolate + NADPH. It carries out the reaction (6R)-5,10-methenyltetrahydrofolate + H2O = (6R)-10-formyltetrahydrofolate + H(+). The protein operates within one-carbon metabolism; tetrahydrofolate interconversion. Its function is as follows. Catalyzes the oxidation of 5,10-methylenetetrahydrofolate to 5,10-methenyltetrahydrofolate and then the hydrolysis of 5,10-methenyltetrahydrofolate to 10-formyltetrahydrofolate. This is Bifunctional protein FolD from Corynebacterium efficiens (strain DSM 44549 / YS-314 / AJ 12310 / JCM 11189 / NBRC 100395).